A 612-amino-acid chain; its full sequence is MMSYEQQQYLTQQQQMNNFTNLTNLTNMNSVNHNFGLMQQQQLVPQQPQLAPPPPPQHQQIPISTQSTPNSTSSTTTTTTTTTSTTTAPTSNSKKSKTTPSNGNKPTSGMVTPIISTPLQLSSVNTPLQQYQPNSQLQPPSPIIKKSSLSTTPNNINNNNNNNNNTNTISPKTKGGNNSAPTPTYSSATINSPYLEVIEQESISVENVIINNRNSNVHIVVKNTSFVLKIRSLDLNKINFSSSCVKAGLYYVNEPLKEVSFIQNPPITYVGSSCKNGEQFAIDIKISILSSQHQGNLFYIMVHVSPENQKSITKDGKEAIVPTTSSTSTSSSATSTTSSSTSSTTTTSSTSNSSTPGSTMGCINGGNSILSFPIRVVSKVDHIKKDPNGVCEKKQTFIDILTDRLSSLENLHLTQSALLSNMLKERGIPESEYSFSEYSEPELISCAFSTSPPSSPFSISGGGGSGGIPSQSGIIKKHKKPSGSSGYGDNKNTAERFLECFNRVIKVYKEHYGKKSFELSKFISSLDNDEKNILVDLLESFTFDESSQVKSLDNNDHCEDCNCETCPYKQQAEQFMLLSPVICFPSPAIKSSNNTNNTNNTNNTNNNTVVTI.

5 disordered regions span residues 46-113 (QQPQ…MVTP), 129-185 (QQYQ…TPTY), 313-360 (TKDG…GSTM), 457-488 (FSIS…SGYG), and 593-612 (NNTN…VVTI). Residues 58–102 (HQQIPISTQSTPNSTSSTTTTTTTTTSTTTAPTSNSKKSKTTPSN) show a composition bias toward low complexity. Polar residues-rich tracts occupy residues 103–113 (GNKPTSGMVTP) and 129–138 (QQYQPNSQLQ). Residues 143-169 (IIKKSSLSTTPNNINNNNNNNNNTNTI) are compositionally biased toward low complexity. Polar residues predominate over residues 175 to 185 (GGNNSAPTPTY). Over residues 323 to 359 (TTSSTSTSSSATSTTSSSTSSTTTTSSTSNSSTPGST) the composition is skewed to low complexity.

This is an uncharacterized protein from Dictyostelium discoideum (Social amoeba).